We begin with the raw amino-acid sequence, 280 residues long: Ribosomal RNA small subunit methyltransferase A (280 aa).

S-adenosyl-L-methionine-binding residues include Asn-30, Val-32, Gly-57, Glu-78, Asp-108, and Asn-125.

Belongs to the class I-like SAM-binding methyltransferase superfamily. rRNA adenine N(6)-methyltransferase family. RsmA subfamily.

It localises to the cytoplasm. The enzyme catalyses adenosine(1518)/adenosine(1519) in 16S rRNA + 4 S-adenosyl-L-methionine = N(6)-dimethyladenosine(1518)/N(6)-dimethyladenosine(1519) in 16S rRNA + 4 S-adenosyl-L-homocysteine + 4 H(+). In terms of biological role, specifically dimethylates two adjacent adenosines (A1518 and A1519) in the loop of a conserved hairpin near the 3'-end of 16S rRNA in the 30S particle. May play a critical role in biogenesis of 30S subunits. The protein is Ribosomal RNA small subunit methyltransferase A of Leifsonia xyli subsp. xyli (strain CTCB07).